The chain runs to 161 residues: UPF0262 protein mll6455 (161 aa).

It belongs to the UPF0262 family.

This is UPF0262 protein mll6455 from Mesorhizobium japonicum (strain LMG 29417 / CECT 9101 / MAFF 303099) (Mesorhizobium loti (strain MAFF 303099)).